Reading from the N-terminus, the 237-residue chain is Ribose-5-phosphate isomerase A (237 aa).

Residues 32-35 (TGRT), 85-88 (DGAD), and 99-102 (KGGG) each bind substrate. Catalysis depends on glutamate 108, which acts as the Proton acceptor. Arginine 126 contributes to the substrate binding site.

This sequence belongs to the ribose 5-phosphate isomerase family. Homodimer.

It carries out the reaction aldehydo-D-ribose 5-phosphate = D-ribulose 5-phosphate. It functions in the pathway carbohydrate degradation; pentose phosphate pathway; D-ribose 5-phosphate from D-ribulose 5-phosphate (non-oxidative stage): step 1/1. In terms of biological role, catalyzes the reversible conversion of ribose-5-phosphate to ribulose 5-phosphate. This Aeropyrum pernix (strain ATCC 700893 / DSM 11879 / JCM 9820 / NBRC 100138 / K1) protein is Ribose-5-phosphate isomerase A.